The primary structure comprises 149 residues: Ribosome maturation factor RimP (149 aa).

The protein belongs to the RimP family.

The protein localises to the cytoplasm. Functionally, required for maturation of 30S ribosomal subunits. The sequence is that of Ribosome maturation factor RimP from Sulfurimonas denitrificans (strain ATCC 33889 / DSM 1251) (Thiomicrospira denitrificans (strain ATCC 33889 / DSM 1251)).